The following is a 244-amino-acid chain: tRNA (guanine-N(1)-)-methyltransferase (244 aa).

S-adenosyl-L-methionine is bound by residues Gly111 and 130 to 135 (IGDYVL).

Belongs to the RNA methyltransferase TrmD family. In terms of assembly, homodimer.

The protein localises to the cytoplasm. It catalyses the reaction guanosine(37) in tRNA + S-adenosyl-L-methionine = N(1)-methylguanosine(37) in tRNA + S-adenosyl-L-homocysteine + H(+). Its function is as follows. Specifically methylates guanosine-37 in various tRNAs. This Phytoplasma australiense protein is tRNA (guanine-N(1)-)-methyltransferase.